Consider the following 87-residue polypeptide: MASEIAIIKVPAPIVTLQQFAELEGVSERTAYRWTTGDNPCVPIEPRTIRKGCKKAGGPIRIYYARWKEEQLRKALGHSRFQLVIGA.

Its function is as follows. Antagonizes transcription from pL during the lytic response. This is Protein apl (apl) from Escherichia phage 186 (Bacteriophage 186).